Reading from the N-terminus, the 247-residue chain is 5'-nucleotidase SurE (247 aa).

Residues aspartate 8, aspartate 9, serine 39, and asparagine 91 each coordinate a divalent metal cation.

This sequence belongs to the SurE nucleotidase family. The cofactor is a divalent metal cation.

It is found in the cytoplasm. It catalyses the reaction a ribonucleoside 5'-phosphate + H2O = a ribonucleoside + phosphate. Nucleotidase that shows phosphatase activity on nucleoside 5'-monophosphates. This is 5'-nucleotidase SurE from Methylobacillus flagellatus (strain ATCC 51484 / DSM 6875 / VKM B-1610 / KT).